Consider the following 276-residue polypeptide: MARQSAEPPTDDGQSAKEIVVITGGNTGIGFEVARQLLCNYGNRFYVIIGSRTLGKGHTAVAALKQQGYEAVQAVQLDVTKEASIAAAAKIIGEQFGRIDVLHVNAGVLLEPTDINAKPVPFSETIMETMRTNVAGAAATVEGFTPLLSIGSNPRVVFMTSTAASAQLMHQYSSMTTAPALSASKAAENIIMIYYYHKYPNWKVNACYPGYRDTAMMRRYNASSLSKAYRQPDPVEEGAYNAVRLSLLGKDGETGTFTEYKGVGEDGQRQYSALPW.

Residues isoleucine 29, serine 51, aspartate 78, and asparagine 105 each coordinate NADP(+). Serine 161 acts as the Proton donor in catalysis. 2 residues coordinate NADP(+): lysine 185 and threonine 214. The active-site Lowers pKa of active site Tyr is lysine 185.

This sequence belongs to the short-chain dehydrogenases/reductases (SDR) family.

It functions in the pathway mycotoxin biosynthesis. Functionally, short-chain dehydrogenase/reductase; part of the core atranone cluster (CAC) which products are predicted to catalyze most or all steps of mycotoxin atranone synthesis, starting from geranylgeranyl pyrophosphate (GGPP). The initial cyclization of GGPP to dolabellane is probably performed by the terpene cyclase ATR13. The Baeyer-Villiger oxidation near the end of the atranone synthesis, which converts atranones D and E to atranones F and G is predicted to be catalyzed by the monooxygenase ATR8. Of the CAC's other predicted gene products, the reducing PKS ATR6 might synthesize a polyketide chain. This polyketide is probably transferred onto the atranone backbone by the polyketide transferase ATR5. Other predicted CAC products include 4 oxygenases (ATR2, ATR3, ATR4, and ATR14), 3 short-chain reductases (ATR7, ATR9, and ATR10), and a methyltransferase (ATR12). These may all be involved in the various steps of atranone biosynthesis, although their specific roles must await experimental determination. This chain is Short-chain dehydrogenase/reductase ATR10, found in Stachybotrys chlorohalonatus (strain IBT 40285).